Consider the following 274-residue polypeptide: MQQLQNVIETAFERRADITPANVDTVTREAVKQVISLLDSGALRVAEKIDGQWVTHQWLKKAVLLSFRINDNQVIDGAESRYFDKVPMKFADYDEARFQKEGFRVVPPAAVRQGAFIARNTVLMPSYVNIGAYVDEGTMVDTWATVGSCAQIGKNVHLSGGVGIGGVLEPLQANPTIIEDNCFIGARSEVVEGVIVEEGSVISMGVYLGQSTKIYDRETGEVHYGRVPAGSVVVSGNLPSKDGKYSLYCAVIVKKVDAKTRGKVGINELLRTID.

2 residues coordinate substrate: arginine 104 and aspartate 141.

The protein belongs to the transferase hexapeptide repeat family. As to quaternary structure, homotrimer.

The protein localises to the cytoplasm. It catalyses the reaction (S)-2,3,4,5-tetrahydrodipicolinate + succinyl-CoA + H2O = (S)-2-succinylamino-6-oxoheptanedioate + CoA. Its pathway is amino-acid biosynthesis; L-lysine biosynthesis via DAP pathway; LL-2,6-diaminopimelate from (S)-tetrahydrodipicolinate (succinylase route): step 1/3. This Salmonella choleraesuis (strain SC-B67) protein is 2,3,4,5-tetrahydropyridine-2,6-dicarboxylate N-succinyltransferase.